Reading from the N-terminus, the 132-residue chain is Small ribosomal subunit protein uS8 (132 aa).

This sequence belongs to the universal ribosomal protein uS8 family. Part of the 30S ribosomal subunit. Contacts proteins S5 and S12.

In terms of biological role, one of the primary rRNA binding proteins, it binds directly to 16S rRNA central domain where it helps coordinate assembly of the platform of the 30S subunit. This Clostridium tetani (strain Massachusetts / E88) protein is Small ribosomal subunit protein uS8.